We begin with the raw amino-acid sequence, 97 residues long: MLNLNLANLQFMAHKKGGGSTSNGRDSQAKRLGAKAADGQTVSGGSILYRQRGTKIYPGANVGRGGDDTLYAKVEGVVRFERKGRDKKQVSVYPIAK.

A propeptide spanning residues methionine 1–methionine 12 is cleaved from the precursor. The tract at residues lysine 15 to alanine 37 is disordered.

The protein belongs to the bacterial ribosomal protein bL27 family. In terms of processing, the N-terminus is cleaved by ribosomal processing cysteine protease Prp.

The sequence is that of Large ribosomal subunit protein bL27 from Streptococcus suis (strain 98HAH33).